We begin with the raw amino-acid sequence, 118 residues long: Large ribosomal subunit protein bL19 (118 aa).

This sequence belongs to the bacterial ribosomal protein bL19 family.

This protein is located at the 30S-50S ribosomal subunit interface and may play a role in the structure and function of the aminoacyl-tRNA binding site. The chain is Large ribosomal subunit protein bL19 (rplS) from Helicobacter pylori (strain J99 / ATCC 700824) (Campylobacter pylori J99).